The chain runs to 305 residues: Ornithine carbamoyltransferase (305 aa).

Residues 50–53 (STRT), glutamine 77, arginine 101, and 128–131 (HPCQ) contribute to the carbamoyl phosphate site. L-ornithine contacts are provided by residues asparagine 159, aspartate 222, and 226–227 (SM). Residues 262-263 (CL) and arginine 290 each bind carbamoyl phosphate.

The protein belongs to the aspartate/ornithine carbamoyltransferase superfamily. OTCase family.

The protein localises to the cytoplasm. It catalyses the reaction carbamoyl phosphate + L-ornithine = L-citrulline + phosphate + H(+). It participates in amino-acid biosynthesis; L-arginine biosynthesis; L-arginine from L-ornithine and carbamoyl phosphate: step 1/3. Its function is as follows. Reversibly catalyzes the transfer of the carbamoyl group from carbamoyl phosphate (CP) to the N(epsilon) atom of ornithine (ORN) to produce L-citrulline. The sequence is that of Ornithine carbamoyltransferase from Synechococcus elongatus (strain ATCC 33912 / PCC 7942 / FACHB-805) (Anacystis nidulans R2).